We begin with the raw amino-acid sequence, 305 residues long: Protoheme IX farnesyltransferase (305 aa).

The next 9 helical transmembrane spans lie at 26–46, 47–67, 98–118, 119–139, 147–167, 174–194, 220–240, 243–263, and 284–304; these read VMSL…QPVN, PFVA…SGAL, LAVG…AANW, FAAG…TIWL, IVIG…CATG, LLMF…LALF, IFAY…TSVG, LYLA…WQIL, and LSLY…WVGG.

This sequence belongs to the UbiA prenyltransferase family. Protoheme IX farnesyltransferase subfamily. As to quaternary structure, interacts with CtaA.

The protein localises to the cell inner membrane. It catalyses the reaction heme b + (2E,6E)-farnesyl diphosphate + H2O = Fe(II)-heme o + diphosphate. The protein operates within porphyrin-containing compound metabolism; heme O biosynthesis; heme O from protoheme: step 1/1. Its function is as follows. Converts heme B (protoheme IX) to heme O by substitution of the vinyl group on carbon 2 of heme B porphyrin ring with a hydroxyethyl farnesyl side group. This Paracoccus denitrificans (strain Pd 1222) protein is Protoheme IX farnesyltransferase.